A 299-amino-acid chain; its full sequence is Taste receptor type 2 member 4 (299 aa).

The Extracellular segment spans residues 1-9 (MLRLFYFSA). The helical transmembrane segment at 10 to 30 (IIASVILNFVGIIMNLFITVV) threads the bilayer. At 31–46 (NCKTWVKSHRISSSDR) the chain is on the cytoplasmic side. Residues 47–67 (ILFSLGITRFLMLGLFLVNTI) form a helical membrane-spanning segment. The Extracellular segment spans residues 68-81 (YFVSSNXERSVYLS). A helical transmembrane segment spans residues 82–102 (AFFVLCFMFLDSSSLWFVTLL). Residues 103–131 (NILYCVKITNFQHSVFLLLKRNISPKIPR) lie on the Cytoplasmic side of the membrane. Residues 132-152 (LLLACVLISAFTTCLYITLSQ) traverse the membrane as a helical segment. The Extracellular portion of the chain corresponds to 153–172 (ASPFPELVTTRNNTSFNINE). N-linked (GlcNAc...) asparagine glycans are attached at residues N164 and N165. Residues 173–193 (GILSLVVSLVLSSSLQFIINV) traverse the membrane as a helical segment. The Cytoplasmic portion of the chain corresponds to 194 to 230 (TSASLLIHSLRRHIQKMQKNATGFWNPQTEAHVGAMK). Residues 231 to 251 (LMVYFLILYIPYSVATLVQYL) form a helical membrane-spanning segment. Residues 252–262 (PFYAGMDMGTK) lie on the Extracellular side of the membrane. The chain crosses the membrane as a helical span at residues 263–283 (SICLIFATLYSPGHSVLIIIT). The Cytoplasmic portion of the chain corresponds to 284–299 (HPKLKTTAKKILCFKK).

The protein belongs to the G-protein coupled receptor T2R family.

Its subcellular location is the membrane. The protein resides in the cell projection. It is found in the cilium membrane. In terms of biological role, gustducin-coupled receptor implicated in the perception of bitter compounds in the oral cavity and the gastrointestinal tract. Signals through PLCB2 and the calcium-regulated cation channel TRPM5. In airway epithelial cells, binding of denatonium increases the intracellular calcium ion concentration and stimulates ciliary beat frequency. This is Taste receptor type 2 member 4 (TAS2R4) from Pan troglodytes (Chimpanzee).